The following is a 311-amino-acid chain: Mitochondrial ribosome-associated GTPase 1 (311 aa).

The 174-residue stretch at 27 to 200 (AKGLKQMKTK…LFDTPGVLSP (174 aa)) folds into the CP-type G domain. Residues 74 to 77 (NKMD), 144 to 149 (NVGKSS), and Gly196 each bind GTP.

Belongs to the TRAFAC class YlqF/YawG GTPase family. MTG1 subfamily.

It localises to the mitochondrion inner membrane. In terms of biological role, plays a role in the regulation of the mitochondrial ribosome assembly and of translational activity. Displays mitochondrial GTPase activity. This chain is Mitochondrial ribosome-associated GTPase 1, found in Xenopus tropicalis (Western clawed frog).